We begin with the raw amino-acid sequence, 365 residues long: Peptide chain release factor 2 (365 aa).

Q251 carries the N5-methylglutamine modification.

It belongs to the prokaryotic/mitochondrial release factor family. Post-translationally, methylated by PrmC. Methylation increases the termination efficiency of RF2.

The protein localises to the cytoplasm. Functionally, peptide chain release factor 2 directs the termination of translation in response to the peptide chain termination codons UGA and UAA. The chain is Peptide chain release factor 2 from Campylobacter jejuni subsp. jejuni serotype O:2 (strain ATCC 700819 / NCTC 11168).